The sequence spans 514 residues: Histidine ammonia-lyase (514 aa).

Residues 143–145 (CSG) constitute a cross-link (5-imidazolinone (Cys-Gly)). 2,3-didehydroalanine (Ser) is present on Ser144.

This sequence belongs to the PAL/histidase family. Post-translationally, contains an active site 4-methylidene-imidazol-5-one (MIO), which is formed autocatalytically by cyclization and dehydration of residues Cys-Ser-Gly.

The protein resides in the cytoplasm. The catalysed reaction is L-histidine = trans-urocanate + NH4(+). Its pathway is amino-acid degradation; L-histidine degradation into L-glutamate; N-formimidoyl-L-glutamate from L-histidine: step 1/3. In Streptomyces griseus, this protein is Histidine ammonia-lyase (hutH).